Reading from the N-terminus, the 156-residue chain is Small ribosomal subunit protein uS7c (156 aa).

The protein belongs to the universal ribosomal protein uS7 family. Part of the 30S ribosomal subunit.

It localises to the plastid. Its subcellular location is the chloroplast. In terms of biological role, one of the primary rRNA binding proteins, it binds directly to 16S rRNA where it nucleates assembly of the head domain of the 30S subunit. This chain is Small ribosomal subunit protein uS7c (rps7), found in Gracilaria tenuistipitata var. liui (Red alga).